We begin with the raw amino-acid sequence, 270 residues long: 2-C-methyl-D-erythritol 4-phosphate cytidylyltransferase (270 aa).

Residues 1–33 (MSDESRPSPAETPATTFAETSAETSAAGRSPAR) form a disordered region. A compositionally biased stretch (low complexity) spans 7-27 (PSPAETPATTFAETSAETSAA).

Belongs to the IspD/TarI cytidylyltransferase family. IspD subfamily.

The enzyme catalyses 2-C-methyl-D-erythritol 4-phosphate + CTP + H(+) = 4-CDP-2-C-methyl-D-erythritol + diphosphate. Its pathway is isoprenoid biosynthesis; isopentenyl diphosphate biosynthesis via DXP pathway; isopentenyl diphosphate from 1-deoxy-D-xylulose 5-phosphate: step 2/6. In terms of biological role, catalyzes the formation of 4-diphosphocytidyl-2-C-methyl-D-erythritol from CTP and 2-C-methyl-D-erythritol 4-phosphate (MEP). The sequence is that of 2-C-methyl-D-erythritol 4-phosphate cytidylyltransferase from Streptomyces coelicolor (strain ATCC BAA-471 / A3(2) / M145).